The chain runs to 508 residues: Photosystem II CP47 reaction center protein (508 aa).

Transmembrane regions (helical) follow at residues serine 21 to serine 36, isoleucine 101 to tryptophan 115, glycine 140 to phenylalanine 156, isoleucine 203 to serine 218, valine 237 to valine 252, and serine 457 to arginine 472.

This sequence belongs to the PsbB/PsbC family. PsbB subfamily. PSII is composed of 1 copy each of membrane proteins PsbA, PsbB, PsbC, PsbD, PsbE, PsbF, PsbH, PsbI, PsbJ, PsbK, PsbL, PsbM, PsbT, PsbX, PsbY, PsbZ, Psb30/Ycf12, at least 3 peripheral proteins of the oxygen-evolving complex and a large number of cofactors. It forms dimeric complexes. Binds multiple chlorophylls. PSII binds additional chlorophylls, carotenoids and specific lipids. is required as a cofactor.

Its subcellular location is the plastid. The protein localises to the chloroplast thylakoid membrane. Functionally, one of the components of the core complex of photosystem II (PSII). It binds chlorophyll and helps catalyze the primary light-induced photochemical processes of PSII. PSII is a light-driven water:plastoquinone oxidoreductase, using light energy to abstract electrons from H(2)O, generating O(2) and a proton gradient subsequently used for ATP formation. The chain is Photosystem II CP47 reaction center protein from Acorus calamus var. americanus (American sweet flag).